Here is a 327-residue protein sequence, read N- to C-terminus: Interleukin-12 subunit beta (327 aa).

An N-terminal signal peptide occupies residues 1 to 22 (MHPQQLVVSWFSLVLLASPIVA). Residues 23 to 106 (IWELEKNVYI…LSRSLLLLHK (84 aa)) form the Ig-like C2-type domain. Residues C50 and C90 are joined by a disulfide bond. Residue N223 is glycosylated (N-linked (GlcNAc...) asparagine). The Fibronectin type-III domain maps to 238–327 (PPKNLQLKPL…WSEWASVSCS (90 aa)).

It belongs to the IL-12B family. In terms of assembly, heterodimer with IL12A; disulfide-linked. The heterodimer is known as interleukin IL-12. Heterodimer with IL23A; disulfide-linked. The heterodimer is known as interleukin IL-23. Also secreted as a monomer. Interacts with NBR1; this interaction promotes IL-12 secretion.

Functionally, cytokine that can act as a growth factor for activated T and NK cells, enhance the lytic activity of NK/lymphokine-activated killer cells, and stimulate the production of IFN-gamma by resting PBMC. In terms of biological role, associates with IL23A to form the IL-23 interleukin, a heterodimeric cytokine which functions in innate and adaptive immunity. IL-23 may constitute with IL-17 an acute response to infection in peripheral tissues. IL-23 binds to a heterodimeric receptor complex composed of IL12RB1 and IL23R, activates the Jak-Stat signaling cascade, stimulates memory rather than naive T-cells and promotes production of pro-inflammatory cytokines. IL-23 induces autoimmune inflammation and thus may be responsible for autoimmune inflammatory diseases and may be important for tumorigenesis. In Bubalus bubalis (Domestic water buffalo), this protein is Interleukin-12 subunit beta (IL12B).